The primary structure comprises 705 residues: Elongation factor G (705 aa).

One can recognise a tr-type G domain in the interval 8–290 (HRYRNIGIMA…GVIHLLPSPA (283 aa)). GTP is bound by residues 17-24 (AHIDAGKT), 88-92 (DTPGH), and 142-145 (NKMD).

The protein belongs to the TRAFAC class translation factor GTPase superfamily. Classic translation factor GTPase family. EF-G/EF-2 subfamily.

Its subcellular location is the cytoplasm. Functionally, catalyzes the GTP-dependent ribosomal translocation step during translation elongation. During this step, the ribosome changes from the pre-translocational (PRE) to the post-translocational (POST) state as the newly formed A-site-bound peptidyl-tRNA and P-site-bound deacylated tRNA move to the P and E sites, respectively. Catalyzes the coordinated movement of the two tRNA molecules, the mRNA and conformational changes in the ribosome. The protein is Elongation factor G of Xylella fastidiosa (strain M23).